The sequence spans 142 residues: Hemoglobin subunit alpha-A (142 aa).

Residues Val-2–Arg-142 enclose the Globin domain. His-59 contacts O2. His-88 provides a ligand contact to heme b.

It belongs to the globin family. As to quaternary structure, heterotetramer of two alpha chains and two beta chains. As to expression, red blood cells.

Functionally, involved in oxygen transport from the lung to the various peripheral tissues. The sequence is that of Hemoglobin subunit alpha-A (HBAA) from Aegypius monachus (Cinereous vulture).